The primary structure comprises 341 residues: Putative [LysW]-lysine/[LysW]-ornithine hydrolase (341 aa).

Histidine 62 serves as a coordination point for Zn(2+). Aspartate 64 is an active-site residue. Aspartate 86 contributes to the Zn(2+) binding site. The active-site Proton acceptor is the glutamate 115. Zn(2+) contacts are provided by glutamate 116, glutamate 140, and histidine 309.

Belongs to the peptidase M20A family. LysK subfamily. Zn(2+) is required as a cofactor. It depends on Co(2+) as a cofactor.

It is found in the cytoplasm. It catalyses the reaction [amino-group carrier protein]-C-terminal-gamma-(L-lysyl)-L-glutamate + H2O = [amino-group carrier protein]-C-terminal-L-glutamate + L-lysine. It carries out the reaction [amino-group carrier protein]-C-terminal-gamma-(L-ornithyl)-L-glutamate + H2O = [amino-group carrier protein]-C-terminal-L-glutamate + L-ornithine. Its pathway is amino-acid biosynthesis; L-lysine biosynthesis via AAA pathway; L-lysine from L-alpha-aminoadipate (Thermus route): step 5/5. It participates in amino-acid biosynthesis; L-arginine biosynthesis. Functionally, catalyzes the release of L-lysine from [LysW]-gamma-L-lysine and the release of L-ornithine from [LysW]-L-ornithine. This Pyrobaculum aerophilum (strain ATCC 51768 / DSM 7523 / JCM 9630 / CIP 104966 / NBRC 100827 / IM2) protein is Putative [LysW]-lysine/[LysW]-ornithine hydrolase.